Reading from the N-terminus, the 494-residue chain is MKYHDLRDFLTLLEQQGELKRITLAVDPHLEMTEIADRTLRAGGPALLFENPKGYAMPVLCNLFGTPRRVAMGMGQEDVTALREVGKLLAFLKEPEPPKGFRDLFDKLPQFKQVLNMPTKRLRGAPCQQKVFSGDDVDLQRIPIMTCWPEDAAPLITWGLTVTRGPHKERQNLGIYRQQLIGKNKLIMRWLSHRGGALDFQEWCAAHPGERFPIAVALGADPATILGAVTPVPDTLSEYAFAGLLRGTKTEVVKCLSSDLEVPASAEIVLEGYIEPGEMAAEGPYGDHTGYYNEVDNFPVFTVTHITQREDAIYHSTYTGRPPDEPAVLGVALNEVFVPILQKQFPEIVDFYLPPEGCSYRLAVVTMKKQYAGHAKRVMMGVWSFLRQFMYTKFVIVCDDDVNARDWNDVIWAITTRMDPARDTVLVENTPIDYLDFASPISGLGSKMGLDATNKWPGETQREWGRPIKKDPEVTARIDAIWDELAIFNDGKGA.

Asn-172 lines the Mn(2+) pocket. Residues 175-177, 189-191, and 194-195 each bind prenylated FMN; these read IYR, RWL, and RG. Residue Glu-238 coordinates Mn(2+). The active-site Proton donor is Asp-287.

The protein belongs to the UbiD family. Homohexamer. Prenylated FMN is required as a cofactor. Requires Mn(2+) as cofactor.

The protein localises to the cell membrane. The enzyme catalyses a 4-hydroxy-3-(all-trans-polyprenyl)benzoate + H(+) = a 2-(all-trans-polyprenyl)phenol + CO2. The protein operates within cofactor biosynthesis; ubiquinone biosynthesis. Catalyzes the decarboxylation of 3-octaprenyl-4-hydroxy benzoate to 2-octaprenylphenol, an intermediate step in ubiquinone biosynthesis. The chain is 3-octaprenyl-4-hydroxybenzoate carboxy-lyase from Citrobacter koseri (strain ATCC BAA-895 / CDC 4225-83 / SGSC4696).